We begin with the raw amino-acid sequence, 211 residues long: DNA/RNA-binding protein ALBA2 (211 aa).

Residues 84 to 99 (NSGLKKNAKNEDKKSG) show a composition bias toward basic and acidic residues. The tract at residues 84-121 (NSGLKKNAKNEDKKSGDEEEEEEEEEEDEENNKNKEAN) is disordered. Positions 100–113 (DEEEEEEEEEEDEE) are enriched in acidic residues.

It belongs to the histone-like Alba family. Identified in a TARE6-associated complex consisting of over 30 proteins and including ALBA1, ALBA2 and ALBA4; the complex binds to the non-coding subtelomeric repeat region TARE6.

It is found in the nucleus. The protein resides in the chromosome. Its subcellular location is the telomere. The protein localises to the cytoplasm. Possesses DNA- and RNA-binding activities. Binds to DNA with relaxed sequence specificity. Associates with the subtelomeric TARE6 repeats. In Plasmodium falciparum (isolate 3D7), this protein is DNA/RNA-binding protein ALBA2.